Here is a 262-residue protein sequence, read N- to C-terminus: Probable esterase azaC (262 aa).

Active-site charge relay system residues include Ser119, Asp188, and His216.

Belongs to the LovG family.

Its pathway is secondary metabolite biosynthesis. Probable esterase; part of the gene cluster that mediates the biosynthesis of azaphilones, a class of fungal metabolites characterized by a highly oxygenated pyrano-quinone bicyclic core and exhibiting a broad range of bioactivities. In the first step, the non-reducing polyketide synthase azaA forms the hexaketide precursor from successive condensations of five malonyl-CoA units, presumably with a simple acetyl-CoA starter unit. The reactive polyketide chain then undergoes a PT-mediated C2-C7 cyclization to afford the aromatic ring and is eventually released as an aldehyde through the R-domain. The putative ketoreductase azaE is proposed to catalyze the reduction of the terminal ketone resulting in the early culture product FK17-P2a. The monooxygenase azaH was demonstrated to be the only enzyme required to convert FK17-P2a to azanigerone E. AzaH first hydroxylates the benzaldehyde intermediate FK17-P2a at C4, which triggers the formation of the pyran-ring to afford azanigerone E. In parallel, the 2,4-dimethylhexanoyl chain is synthesized by the HR-PKS azaB and is proposed to be transferred to the C4-hydroxyl of azanigerone E by the acyltransferase azaD directly from the ACP domain of azaB. Alternatively, the 2,4-dimethyl-hexanoyl chain may be offloaded from the HR-PKS as a carboxylic acid and converted to an acyl-CoA by azaF. The resulting acyl-CoA molecule could then be taken up as a substrate by AzaD to form azanigerone B. To yield the carboxylic acid substituent in azanigerone A, the hydroxypropyl side chain of azanigerone B would need to undergo a C-C oxidative cleavage catalyzed by cytochrome P450 AzaI. AzaI is proposed to act on a vicinal diol that leads to a C-C bond scission either through an alkoxyradical intermediate or a peroxy complex. In the biosynthesis of azanigerone A, azanigerone B first undergoes hydroxylation at C10, possibly catalyzed by one of the two FAD-dependent monooxygenases encoded in the cluster, azaG or azaL, resulting in the vicinal diol azanigerone C. Oxidative cleavage of azanigerone C by azaI would yield the corresponding aldehyde derivative of azanigerone A. Finally, the dehydrogenase azaJ is proposed to convert the aldehyde functional group into the carboxylic acid, completing the conversion from azanigerone B to azanigerone A. Alternatively, the oxidation of aldehyde to carboxylic acid may be catalyzed by the same P450 enzyme azaI via consecutive oxidation or by endogenous alcohol dehydrogenase. In Aspergillus niger (strain ATCC 1015 / CBS 113.46 / FGSC A1144 / LSHB Ac4 / NCTC 3858a / NRRL 328 / USDA 3528.7), this protein is Probable esterase azaC.